The chain runs to 732 residues: Photosystem I P700 chlorophyll a apoprotein A2 (732 aa).

A run of 8 helical transmembrane segments spans residues 46–69, 133–156, 173–197, 271–289, 328–351, 367–393, 415–437, and 515–533; these read IFAS…FHVA, LYTG…LHIQ, LNHH…HVAI, MAHH…GHMY, LHFQ…QHMY, SALY…IFFI, AVIS…LYVH, and FLVH…LILV. Positions 557 and 566 each coordinate [4Fe-4S] cluster. A run of 2 helical transmembrane segments spans residues 573-594 and 641-663; these read AFYL…YWHW and LAVW…MFLI. Residues His652, Met660, and Tyr668 each contribute to the chlorophyll a site. Trp669 contributes to the phylloquinone binding site. A helical membrane pass occupies residues 705–725; sequence LVGLVHFTVGYILTYAAFVIA.

Belongs to the PsaA/PsaB family. The PsaA/B heterodimer binds the P700 chlorophyll special pair and subsequent electron acceptors. PSI consists of a core antenna complex that captures photons, and an electron transfer chain that converts photonic excitation into a charge separation. The eukaryotic PSI reaction center is composed of at least 11 subunits. Requires P700 is a chlorophyll a/chlorophyll a' dimer, A0 is one or more chlorophyll a, A1 is one or both phylloquinones and FX is a shared 4Fe-4S iron-sulfur center. as cofactor.

Its subcellular location is the plastid. The protein localises to the chloroplast thylakoid membrane. It catalyses the reaction reduced [plastocyanin] + hnu + oxidized [2Fe-2S]-[ferredoxin] = oxidized [plastocyanin] + reduced [2Fe-2S]-[ferredoxin]. PsaA and PsaB bind P700, the primary electron donor of photosystem I (PSI), as well as the electron acceptors A0, A1 and FX. PSI is a plastocyanin/cytochrome c6-ferredoxin oxidoreductase, converting photonic excitation into a charge separation, which transfers an electron from the donor P700 chlorophyll pair to the spectroscopically characterized acceptors A0, A1, FX, FA and FB in turn. Oxidized P700 is reduced on the lumenal side of the thylakoid membrane by plastocyanin or cytochrome c6. This chain is Photosystem I P700 chlorophyll a apoprotein A2, found in Cyanidioschyzon merolae (strain NIES-3377 / 10D) (Unicellular red alga).